Consider the following 182-residue polypeptide: Superoxide dismutase [Cu-Zn] (182 aa).

The first 19 residues, Met1–Ala19, serve as a signal peptide directing secretion. Cys20 carries the N-palmitoyl cysteine lipid modification. Cys20 carries S-diacylglycerol cysteine lipidation. The Cu cation site is built by His69, His71, and His95. A disulfide bond links Cys76 and Cys175. The disordered stretch occupies residues Ala91–Asp118. Zn(2+) contacts are provided by His95, His104, His115, and Asp118. Positions His102 to His115 are enriched in basic and acidic residues.

The protein belongs to the Cu-Zn superoxide dismutase family. Requires Cu cation as cofactor. The cofactor is Zn(2+).

It is found in the cell membrane. It catalyses the reaction 2 superoxide + 2 H(+) = H2O2 + O2. Functionally, destroys radicals which are normally produced within the cells and which are toxic to biological systems. The polypeptide is Superoxide dismutase [Cu-Zn] (sodC) (Deinococcus radiodurans (strain ATCC 13939 / DSM 20539 / JCM 16871 / CCUG 27074 / LMG 4051 / NBRC 15346 / NCIMB 9279 / VKM B-1422 / R1)).